Reading from the N-terminus, the 112-residue chain is uncharacterized protein (112 aa).

N-linked (GlcNAc...) asparagine; by host glycosylation is found at N29 and N60. A helical transmembrane segment spans residues 66–86 (IFNGLGFILIVIFIYLLLITL).

It belongs to the asfivirus B117L family.

The protein localises to the host membrane. Its subcellular location is the virion. This is an uncharacterized protein from Ornithodoros (relapsing fever ticks).